Reading from the N-terminus, the 504-residue chain is D-alanine--D-alanyl carrier protein ligase (504 aa).

152-153 (TS) contributes to the ATP binding site. D-alanine is bound at residue D197. Residue 292-297 (NTYGPT) coordinates ATP. V301 lines the D-alanine pocket. ATP is bound by residues D383, 394–397 (YNGR), and K492. K492 contributes to the D-alanine binding site.

It belongs to the ATP-dependent AMP-binding enzyme family. DltA subfamily.

It localises to the cytoplasm. It catalyses the reaction holo-[D-alanyl-carrier protein] + D-alanine + ATP = D-alanyl-[D-alanyl-carrier protein] + AMP + diphosphate. It functions in the pathway cell wall biogenesis; lipoteichoic acid biosynthesis. Functionally, catalyzes the first step in the D-alanylation of lipoteichoic acid (LTA), the activation of D-alanine and its transfer onto the D-alanyl carrier protein (Dcp) DltC. In an ATP-dependent two-step reaction, forms a high energy D-alanyl-AMP intermediate, followed by transfer of the D-alanyl residue as a thiol ester to the phosphopantheinyl prosthetic group of the Dcp. D-alanylation of LTA plays an important role in modulating the properties of the cell wall in Gram-positive bacteria, influencing the net charge of the cell wall. This chain is D-alanine--D-alanyl carrier protein ligase, found in Bacillus mycoides (strain KBAB4) (Bacillus weihenstephanensis).